The following is a 295-amino-acid chain: Acetylglutamate kinase (295 aa).

Substrate-binding positions include 66–67, Arg88, and Asn193; that span reads GG.

The protein belongs to the acetylglutamate kinase family. ArgB subfamily.

It localises to the cytoplasm. The catalysed reaction is N-acetyl-L-glutamate + ATP = N-acetyl-L-glutamyl 5-phosphate + ADP. The protein operates within amino-acid biosynthesis; L-arginine biosynthesis; N(2)-acetyl-L-ornithine from L-glutamate: step 2/4. In terms of biological role, catalyzes the ATP-dependent phosphorylation of N-acetyl-L-glutamate. This is Acetylglutamate kinase from Allorhizobium ampelinum (strain ATCC BAA-846 / DSM 112012 / S4) (Agrobacterium vitis (strain S4)).